Reading from the N-terminus, the 391-residue chain is Polysialic acid biosynthesis protein P7 (391 aa).

May be involved in the synthesis of polysialic acid (PSA). This Escherichia coli protein is Polysialic acid biosynthesis protein P7 (neuC).